A 247-amino-acid chain; its full sequence is Cell division protein ZapD (247 aa).

It belongs to the ZapD family. Interacts with FtsZ.

It is found in the cytoplasm. Functionally, cell division factor that enhances FtsZ-ring assembly. Directly interacts with FtsZ and promotes bundling of FtsZ protofilaments, with a reduction in FtsZ GTPase activity. The polypeptide is Cell division protein ZapD (Escherichia coli O7:K1 (strain IAI39 / ExPEC)).